A 271-amino-acid chain; its full sequence is Undecaprenyl-diphosphatase 2 (271 aa).

The next 8 helical transmembrane spans lie at 1–21, 46–66, 88–108, 111–131, 146–166, 190–210, 220–240, and 251–271; these read MNFF…LFPI, NFLE…IVYF, ALIV…EQTI, AFSD…LLFF, LKGW…IPGF, SMLL…PKLI, LSLI…YILM, and MLPF…SKAI.

Belongs to the UppP family.

It is found in the cell membrane. The catalysed reaction is di-trans,octa-cis-undecaprenyl diphosphate + H2O = di-trans,octa-cis-undecaprenyl phosphate + phosphate + H(+). Functionally, catalyzes the dephosphorylation of undecaprenyl diphosphate (UPP). Confers resistance to bacitracin. This chain is Undecaprenyl-diphosphatase 2, found in Oenococcus oeni (strain ATCC BAA-331 / PSU-1).